A 227-amino-acid chain; its full sequence is Urease accessory protein UreF (227 aa).

Belongs to the UreF family. As to quaternary structure, ureD, UreF and UreG form a complex that acts as a GTP-hydrolysis-dependent molecular chaperone, activating the urease apoprotein by helping to assemble the nickel containing metallocenter of UreC. The UreE protein probably delivers the nickel.

It localises to the cytoplasm. In terms of biological role, required for maturation of urease via the functional incorporation of the urease nickel metallocenter. This is Urease accessory protein UreF from Blochmanniella floridana.